Consider the following 112-residue polypeptide: Putative pterin-4-alpha-carbinolamine dehydratase (112 aa).

The protein belongs to the pterin-4-alpha-carbinolamine dehydratase family.

The enzyme catalyses (4aS,6R)-4a-hydroxy-L-erythro-5,6,7,8-tetrahydrobiopterin = (6R)-L-erythro-6,7-dihydrobiopterin + H2O. The protein is Putative pterin-4-alpha-carbinolamine dehydratase of Shewanella denitrificans (strain OS217 / ATCC BAA-1090 / DSM 15013).